Consider the following 393-residue polypeptide: Ceramide synthase 4 (393 aa).

Residues 1 to 31 lie on the Lumenal side of the membrane; it reads MWSSLNDWLWNERLWLPANISWAQLEDHDGL. An N-linked (GlcNAc...) asparagine glycan is attached at Asn19. The chain crosses the membrane as a helical span at residues 32 to 52; that stretch reads VFPHPQDTLMAVPLALALVVV. The interval 67-128 is homeobox-like; sequence WLGVRNQIRR…RRRRNQDRPC (62 aa). The TLC domain maps to 131-332; the sequence is KKFCESSWKF…ILCMIYSFIK (202 aa). Transmembrane regions (helical) follow at residues 140-160, 179-199, 209-229, and 260-280; these read FVFYLCCFVCGTMVLYHESWL, LYHWYLLELSFYISLLMTLPF, QVIHHFVTIILISFSYSLNLL, and MCDTLFIIFSLVFFYTRLVLF. The Last loop motif signature appears at 291–301; it reads ESIGNFSPFFG. A helical membrane pass occupies residues 304 to 324; it reads FLNILLVILQLLHVFWSWLIL. Topologically, residues 325-393 are cytoplasmic; it reads CMIYSFIKKG…RMVNRHTPAT (69 aa). Phosphoserine is present on residues Ser342, Ser349, and Ser350. Over residues 346-356 the composition is skewed to acidic residues; the sequence is ELDSSDGEAAE. Positions 346-393 are disordered; it reads ELDSSDGEAAEECPQMKNGAAQRPGAAPTDGPRSRAAGRMVNRHTPAT.

Phosphorylated at the C-terminus by CK2.

The protein resides in the endoplasmic reticulum membrane. The enzyme catalyses sphinganine + octadecanoyl-CoA = N-(octadecanoyl)-sphinganine + CoA + H(+). It catalyses the reaction eicosanoyl-CoA + sphinganine = N-eicosanoylsphinganine + CoA + H(+). The catalysed reaction is docosanoyl-CoA + sphinganine = N-docosanoylsphinganine + CoA + H(+). It carries out the reaction tetracosanoyl-CoA + sphinganine = N-tetracosanoylsphinganine + CoA + H(+). The enzyme catalyses hexacosanoyl-CoA + sphinganine = N-hexacosanoylsphinganine + CoA + H(+). It catalyses the reaction a fatty acyl-CoA + sphing-4-enine = an N-acylsphing-4-enine + CoA + H(+). The catalysed reaction is sphing-4-enine + octadecanoyl-CoA = N-octadecanoylsphing-4-enine + CoA + H(+). It carries out the reaction hexadecasphinganine + octadecanoyl-CoA = N-octadecanoylhexadecasphinganine + CoA + H(+). The protein operates within lipid metabolism; sphingolipid metabolism. Ceramide synthase that catalyzes formation of ceramide from sphinganine and acyl-CoA substrates, with high selectivity toward long and very-long chains (C18:0-C22:0) as acyl donor. The chain is Ceramide synthase 4 from Bos taurus (Bovine).